The primary structure comprises 199 residues: Inner membrane-spanning protein YciB (199 aa).

Helical transmembrane passes span 4 to 24 (FIDFIPLILFFIVYKLEPRIV), 36 to 56 (IFSATAVLILASLLVYGTLFL), 64 to 84 (GQWITLLACLVFGGMTLTFQS), 90 to 110 (WKAPVVNWLFALGFAASHFIG), 135 to 155 (LAWVAFFVFSGCANLFVAFTF), and 162 to 182 (FKVFGSLGMTVLFLVGQGVFL).

It belongs to the YciB family.

It is found in the cell inner membrane. Functionally, plays a role in cell envelope biogenesis, maintenance of cell envelope integrity and membrane homeostasis. The chain is Inner membrane-spanning protein YciB from Azotobacter vinelandii (strain DJ / ATCC BAA-1303).